The following is a 471-amino-acid chain: V-type ATP synthase beta chain (471 aa).

This sequence belongs to the ATPase alpha/beta chains family.

In terms of biological role, produces ATP from ADP in the presence of a proton gradient across the membrane. The V-type beta chain is a regulatory subunit. This chain is V-type ATP synthase beta chain, found in Deinococcus deserti (strain DSM 17065 / CIP 109153 / LMG 22923 / VCD115).